A 134-amino-acid polypeptide reads, in one-letter code: Phosphomevalonate dehydratase small subunit (134 aa).

Ser62 functions as the Proton acceptor in the catalytic mechanism.

The protein belongs to the AcnX type II small subunit family. In terms of assembly, heterodimer composed of a large subunit (PMDh-L) and a small subunit (PMDh-S).

It carries out the reaction (R)-5-phosphomevalonate = (2E)-3-methyl-5-phosphooxypent-2-enoate + H2O. It participates in isoprenoid biosynthesis; isopentenyl diphosphate biosynthesis via mevalonate pathway. Functionally, component of a hydro-lyase that catalyzes the dehydration of mevalonate 5-phosphate (MVA5P) to form trans-anhydromevalonate 5-phosphate (tAHMP). Involved in the archaeal mevalonate (MVA) pathway, which provides fundamental precursors for isoprenoid biosynthesis, such as isopentenyl diphosphate (IPP) and dimethylallyl diphosphate (DMAPP). In Pyrococcus horikoshii (strain ATCC 700860 / DSM 12428 / JCM 9974 / NBRC 100139 / OT-3), this protein is Phosphomevalonate dehydratase small subunit.